A 424-amino-acid chain; its full sequence is uncharacterized protein (424 aa).

Lys-259 is modified (N6-(pyridoxal phosphate)lysine).

The protein belongs to the class-III pyridoxal-phosphate-dependent aminotransferase family. The cofactor is pyridoxal 5'-phosphate.

This is an uncharacterized protein from Archaeoglobus fulgidus (strain ATCC 49558 / DSM 4304 / JCM 9628 / NBRC 100126 / VC-16).